Consider the following 277-residue polypeptide: Radial spoke head protein 9 homolog (277 aa).

It belongs to the flagellar radial spoke RSP9 family. In terms of assembly, component of axonemal radial spoke complexes.

It localises to the cytoplasm. Its subcellular location is the cytoskeleton. The protein localises to the cilium axoneme. It is found in the flagellum axoneme. The protein resides in the cell projection. It localises to the kinocilium. Functions as part of axonemal radial spoke complexes that play an important part in the motility of sperm and cilia. Required for motility of olfactory and neural cilia and for the structural integrity of ciliary axonemes in both 9+0 and 9+2 motile cilia. Essential for both the radial spoke head assembly and the central pair microtubule stability in ependymal motile cilia. In Danio rerio (Zebrafish), this protein is Radial spoke head protein 9 homolog (rsph9).